Consider the following 354-residue polypeptide: DNA polymerase IV 2 (354 aa).

The UmuC domain occupies 4–184 (IIHIDMDAFY…LPVKKFHGVG (181 aa)). Positions 8 and 102 each coordinate Mg(2+). The active site involves Glu-103.

The protein belongs to the DNA polymerase type-Y family. In terms of assembly, monomer. Mg(2+) serves as cofactor.

The protein resides in the cytoplasm. It catalyses the reaction DNA(n) + a 2'-deoxyribonucleoside 5'-triphosphate = DNA(n+1) + diphosphate. In terms of biological role, poorly processive, error-prone DNA polymerase involved in untargeted mutagenesis. Copies undamaged DNA at stalled replication forks, which arise in vivo from mismatched or misaligned primer ends. These misaligned primers can be extended by PolIV. Exhibits no 3'-5' exonuclease (proofreading) activity. May be involved in translesional synthesis, in conjunction with the beta clamp from PolIII. The chain is DNA polymerase IV 2 (dinB2) from Rhizobium meliloti (strain 1021) (Ensifer meliloti).